A 402-amino-acid chain; its full sequence is Selenoprotein P (402 aa).

Residues 1–19 (MWRGLGLALALCLLLTGGT) form the signal peptide. U59 is a non-standard amino acid (selenocysteine). Residues N83 and N174 are each glycosylated (N-linked (GlcNAc...) asparagine). Positions 196 to 291 (KTAEASQRHH…VGSESLQPSL (96 aa)) are disordered. A compositionally biased stretch (basic residues) spans 203-231 (RHHHPHPHSHPHPHPHPHPHPHPHPHHGH). Repeat copies occupy residues 204–205 (HH), 206–207 (HP), 208–209 (HP), 210–211 (HS), 212–213 (HP), 214–215 (HP), 216–217 (HP), 218–219 (HP), 220–221 (HP), 222–223 (HP), 224–225 (HP), 226–227 (HP), and 228–229 (HH). The tract at residues 204–229 (HHHPHPHSHPHPHPHPHPHPHPHPHH) is 13 X 2 AA tandem repeats of H-[PHS]. Residues 232 to 247 (QLHENAHLSESPKPDT) are compositionally biased toward basic and acidic residues. The span at 259–269 (LHHHHHRHKGP) shows a compositional bias: basic residues. S284 is modified (phosphoserine). Residues U297, U307, U338, U350, U363, U365, U372, U388, U390, U397, and U399 are each a non-standard amino acid (selenocysteine). Residues 367-402 (LPPAAUQAAGQQLNPTEASTKUSUKNKAKMUKUPSN) form a disordered region.

Belongs to the selenoprotein P family. Post-translationally, phosphorylation sites are present in the extracellular medium. Brain and kidney. Most prominently expressed in the cerebellar cortex, hippocampus and olfactory bulb.

Its subcellular location is the secreted. Functionally, constitutes a major selenium pool in the brain and may play an important role in developing and/or modulating the morphology of neurons and/or glial cells. In Bos taurus (Bovine), this protein is Selenoprotein P.